A 208-amino-acid polypeptide reads, in one-letter code: N-(5'-phosphoribosyl)anthranilate isomerase (208 aa).

The protein belongs to the TrpF family.

It carries out the reaction N-(5-phospho-beta-D-ribosyl)anthranilate = 1-(2-carboxyphenylamino)-1-deoxy-D-ribulose 5-phosphate. The protein operates within amino-acid biosynthesis; L-tryptophan biosynthesis; L-tryptophan from chorismate: step 3/5. This Chlamydia trachomatis serovar L2 (strain ATCC VR-902B / DSM 19102 / 434/Bu) protein is N-(5'-phosphoribosyl)anthranilate isomerase.